The following is a 423-amino-acid chain: COP9 signalosome complex subunit 3 (423 aa).

In terms of domain architecture, PCI spans Asn197–Glu365. Residues Gln402–Ser423 are disordered.

The protein belongs to the CSN3 family. Component of the CSN complex, probably composed of cops1, cops2, cops3, cops4, cops5, cops6, cops7, cops8 and cops9.

Its subcellular location is the cytoplasm. The protein resides in the nucleus. Functionally, component of the COP9 signalosome complex (CSN), a complex involved in various cellular and developmental processes. The CSN complex is an essential regulator of the ubiquitin (Ubl) conjugation pathway by mediating the deneddylation of the cullin subunits of E3 ligase complexes, leading to modify the Ubl ligase activity. The chain is COP9 signalosome complex subunit 3 (cops3) from Danio rerio (Zebrafish).